A 261-amino-acid chain; its full sequence is Tryptophan synthase alpha chain (261 aa).

Catalysis depends on proton acceptor residues glutamate 47 and aspartate 58.

Belongs to the TrpA family. As to quaternary structure, tetramer of two alpha and two beta chains.

The catalysed reaction is (1S,2R)-1-C-(indol-3-yl)glycerol 3-phosphate + L-serine = D-glyceraldehyde 3-phosphate + L-tryptophan + H2O. The protein operates within amino-acid biosynthesis; L-tryptophan biosynthesis; L-tryptophan from chorismate: step 5/5. The alpha subunit is responsible for the aldol cleavage of indoleglycerol phosphate to indole and glyceraldehyde 3-phosphate. The polypeptide is Tryptophan synthase alpha chain (Neisseria meningitidis serogroup B (strain ATCC BAA-335 / MC58)).